A 128-amino-acid chain; its full sequence is Small ribosomal subunit protein bS6 (128 aa).

Positions 100–128 (SPMAKAKEERFTRRDDERREEATEAASEE) are disordered. Positions 104–121 (KAKEERFTRRDDERREEA) are enriched in basic and acidic residues.

This sequence belongs to the bacterial ribosomal protein bS6 family.

Functionally, binds together with bS18 to 16S ribosomal RNA. In Aeromonas hydrophila subsp. hydrophila (strain ATCC 7966 / DSM 30187 / BCRC 13018 / CCUG 14551 / JCM 1027 / KCTC 2358 / NCIMB 9240 / NCTC 8049), this protein is Small ribosomal subunit protein bS6.